Consider the following 85-residue polypeptide: Alpha-toxin Amm8 (85 aa).

Positions 1-19 (MNYLVMISLALLFMTGVES) are cleaved as a signal peptide. The LCN-type CS-alpha/beta domain occupies 21 to 83 (KDGYIVNDIN…VRTKGPGRCN (63 aa)). Disulfide bonds link Cys31–Cys82, Cys35–Cys55, Cys41–Cys65, and Cys45–Cys67. Arg85 is a propeptide (removed by a carboxypeptidase).

It belongs to the long (4 C-C) scorpion toxin superfamily. Sodium channel inhibitor family. Alpha subfamily. Expressed by the venom gland.

It is found in the secreted. In terms of biological role, alpha toxins bind voltage-independently at site-3 of sodium channels (Nav) and inhibit the inactivation of the activated channels, thereby blocking neuronal transmission. The toxin principally slows the inactivation process of TTX-sensitive sodium channels. It discriminates neuronal versus muscular sodium channel, as it is more potent on rat brain Nav1.2/SCN2A (EC(50)=29 nM) than on rat skeletal muscle Nav1.4/SCN4A (EC(50)=416 nM). It also shows a weak activity on Nav1.7/SCN9A (EC(50)=1.76 uM). In vivo, the toxin produces pain hypersensibility to mechanical and thermal stimuli. It also exhibits potent analgesic activity (when injected intraperitoneally), increasing hot plate and tail flick withdrawal latencies in a dose-dependent fashion. This paradoxical analgesic action, is significantly suppressed by opioid receptor antagonists, suggesting a pain-induced analgesia mechanism that involves an endogenous opioid system. This led to hypothesis that pain relief induced by peripheral administration of Amm VIII may result from sensitization of primary afferent neurons and subsequent activation of an opioid-dependent noxious inhibitory control. The polypeptide is Alpha-toxin Amm8 (Androctonus mauritanicus mauritanicus (Scorpion)).